We begin with the raw amino-acid sequence, 193 residues long: Protein Syd (193 aa).

This sequence belongs to the Syd family.

It localises to the cell inner membrane. Interacts with the SecY protein in vivo. May bind preferentially to an uncomplexed state of SecY, thus functioning either as a chelating agent for excess SecY in the cell or as a regulatory factor that negatively controls the translocase function. The sequence is that of Protein Syd from Tolumonas auensis (strain DSM 9187 / NBRC 110442 / TA 4).